A 242-amino-acid polypeptide reads, in one-letter code: Methylthioribulose-1-phosphate dehydratase (242 aa).

A substrate-binding site is contributed by Cys-97. The Zn(2+) site is built by His-115 and His-117. The active-site Proton donor/acceptor is Glu-139. His-195 contributes to the Zn(2+) binding site.

It belongs to the aldolase class II family. MtnB subfamily. In terms of assembly, homotetramer. Interacts with APAF1. May interact with CASP1. The cofactor is Zn(2+).

It localises to the cytoplasm. The catalysed reaction is 5-(methylsulfanyl)-D-ribulose 1-phosphate = 5-methylsulfanyl-2,3-dioxopentyl phosphate + H2O. Its pathway is amino-acid biosynthesis; L-methionine biosynthesis via salvage pathway; L-methionine from S-methyl-5-thio-alpha-D-ribose 1-phosphate: step 2/6. Catalyzes the dehydration of methylthioribulose-1-phosphate (MTRu-1-P) into 2,3-diketo-5-methylthiopentyl-1-phosphate (DK-MTP-1-P). Functions in the methionine salvage pathway, which plays a key role in cancer, apoptosis, microbial proliferation and inflammation. May inhibit the CASP1-related inflammatory response (pyroptosis), the CASP9-dependent apoptotic pathway and the cytochrome c-dependent and APAF1-mediated cell death. This chain is Methylthioribulose-1-phosphate dehydratase, found in Bos taurus (Bovine).